Consider the following 879-residue polypeptide: Paramyosin, long form (879 aa).

Residues Met1–Ile31 are nonhelical region. Ser18 carries the phosphoserine modification. A coiled-coil region spans residues Gln32–Val858. Residues Thr859–Glu879 form a nonhelical region region.

This sequence belongs to the paramyosin family. Heterodimer of two isoforms. In terms of processing, the more-acidic and less-abundant isoform is phosphorylated. As to expression, expressed in all larval and adult muscle tissues. Expression is five times higher in tubular than in fibrillar muscles.

Its subcellular location is the cytoplasm. It localises to the myofibril. In terms of biological role, paramyosin is a major structural component of many thick filaments isolated from invertebrate muscles. This Drosophila melanogaster (Fruit fly) protein is Paramyosin, long form (Prm).